The following is a 283-amino-acid chain: uncharacterized protein (283 aa).

A disordered region spans residues 1-21; it reads MSAYTHPMERELSGLSSRGNS. Residues 41–61 form a helical membrane-spanning segment; sequence SIFIASLVTFGVLMITLLIAL.

This sequence belongs to the APS1/VSP family.

It is found in the membrane. This is an uncharacterized protein from Arabidopsis thaliana (Mouse-ear cress).